A 67-amino-acid chain; its full sequence is MKKGLHPRYEETKVVCACGNVIVTASTVKDLRVEICSACHPFFTGKQKLVDSAGRIDRFNRRYKIRG.

Positions 16, 18, 36, and 39 each coordinate Zn(2+).

Belongs to the bacterial ribosomal protein bL31 family. Type A subfamily. As to quaternary structure, part of the 50S ribosomal subunit. It depends on Zn(2+) as a cofactor.

Functionally, binds the 23S rRNA. The protein is Large ribosomal subunit protein bL31 of Treponema pallidum (strain Nichols).